A 295-amino-acid polypeptide reads, in one-letter code: MTSTINKHLDGEGSVQVKQDPKVNIEEGALVIAVYGKGGIGKSTTSSNLSAAFSKLGKKVLQIGCDPKHDSTFTLTHKMVPTVIDILEEVDFHSEELRPTDFMFEGFNGVMCVESGGPPAGTGCGGYVTGQTVKLLKEHHLLEDTDVVIFDVLGDVVCGGFAAPLQHANYCLIVTANDFDSIFAMNRIVSAIKAKAKNYKVRLGGVVANRSKDTDQIDKFNDRTGLKTMAHFKDVDAIRRSRLKKCTIFEMEPTEDVIEVQNEYLSLAKNMLENVEPLEGTPLKDREIFDLLGFD.

Residues 39-44 and Lys-68 each bind ATP; that span reads GIGKST. Residue Ser-43 participates in Mg(2+) binding. [4Fe-4S] cluster-binding residues include Cys-124 and Cys-158. 209 to 210 contributes to the ATP binding site; that stretch reads NR.

Belongs to the NifH/BchL/ChlL family. Homodimer. Protochlorophyllide reductase is composed of three subunits; ChlL, ChlN and ChlB. The cofactor is [4Fe-4S] cluster.

It catalyses the reaction chlorophyllide a + oxidized 2[4Fe-4S]-[ferredoxin] + 2 ADP + 2 phosphate = protochlorophyllide a + reduced 2[4Fe-4S]-[ferredoxin] + 2 ATP + 2 H2O. It participates in porphyrin-containing compound metabolism; chlorophyll biosynthesis (light-independent). Functionally, component of the dark-operative protochlorophyllide reductase (DPOR) that uses Mg-ATP and reduced ferredoxin to reduce ring D of protochlorophyllide (Pchlide) to form chlorophyllide a (Chlide). This reaction is light-independent. The L component serves as a unique electron donor to the NB-component of the complex, and binds Mg-ATP. The sequence is that of Light-independent protochlorophyllide reductase iron-sulfur ATP-binding protein from Prochlorococcus marinus (strain MIT 9515).